Here is an 84-residue protein sequence, read N- to C-terminus: Kidney-associated antigen 1 (84 aa).

The segment at 31–84 (PGAAAAHLPRWPPPQLAASRREAPPLSQRPHRTQGAGSPPETNEKLTNPQVKEK) is disordered. The segment covering 75–84 (KLTNPQVKEK) has biased composition (polar residues).

As to expression, expressed in testis and kidney, and, at lower levels, in urinary bladder and liver. Expressed by a high proportion of tumors of various histologic origin, including melanomas, sarcomas and colorectal carcinomas.

The chain is Kidney-associated antigen 1 (KAAG1) from Homo sapiens (Human).